Here is a 161-residue protein sequence, read N- to C-terminus: Phosphopantetheine adenylyltransferase (161 aa).

Residue Ser-8 participates in substrate binding. ATP-binding positions include 8-9 (SF) and His-16. The substrate site is built by Lys-40, Thr-72, and Arg-86. ATP is bound by residues 87–89 (GLR), Glu-97, and 122–128 (HSFLSSS).

The protein belongs to the bacterial CoaD family. As to quaternary structure, homohexamer. Mg(2+) serves as cofactor.

Its subcellular location is the cytoplasm. It catalyses the reaction (R)-4'-phosphopantetheine + ATP + H(+) = 3'-dephospho-CoA + diphosphate. It participates in cofactor biosynthesis; coenzyme A biosynthesis; CoA from (R)-pantothenate: step 4/5. Functionally, reversibly transfers an adenylyl group from ATP to 4'-phosphopantetheine, yielding dephospho-CoA (dPCoA) and pyrophosphate. In Gloeobacter violaceus (strain ATCC 29082 / PCC 7421), this protein is Phosphopantetheine adenylyltransferase.